The following is a 130-amino-acid chain: Small ribosomal subunit protein uS9 (130 aa).

This sequence belongs to the universal ribosomal protein uS9 family.

The sequence is that of Small ribosomal subunit protein uS9 from Halorhodospira halophila (strain DSM 244 / SL1) (Ectothiorhodospira halophila (strain DSM 244 / SL1)).